The sequence spans 416 residues: Gamma-glutamyl phosphate reductase (416 aa).

This sequence belongs to the gamma-glutamyl phosphate reductase family.

It localises to the cytoplasm. The catalysed reaction is L-glutamate 5-semialdehyde + phosphate + NADP(+) = L-glutamyl 5-phosphate + NADPH + H(+). The protein operates within amino-acid biosynthesis; L-proline biosynthesis; L-glutamate 5-semialdehyde from L-glutamate: step 2/2. Catalyzes the NADPH-dependent reduction of L-glutamate 5-phosphate into L-glutamate 5-semialdehyde and phosphate. The product spontaneously undergoes cyclization to form 1-pyrroline-5-carboxylate. The chain is Gamma-glutamyl phosphate reductase from Salmonella newport (strain SL254).